A 242-amino-acid chain; its full sequence is Mannosyl-3-phosphoglycerate phosphatase (242 aa).

Residue Asp-8 is the Nucleophile of the active site. 4 residues coordinate Mg(2+): Asp-8, Asp-10, Ser-169, and Asp-204.

Belongs to the HAD-like hydrolase superfamily. MPGP family. Requires Mg(2+) as cofactor.

It localises to the cytoplasm. The catalysed reaction is 2-O-(alpha-D-mannosyl)-3-phosphoglycerate + H2O = (2R)-2-O-(alpha-D-mannosyl)-glycerate + phosphate. It participates in carbohydrate biosynthesis; 2-(alpha-D-mannosyl)-D-glycerate biosynthesis; 2-(alpha-D-mannosyl)-D-glycerate from GDP-alpha-D-mannose (MPG route): step 2/2. Its function is as follows. Hydrolyzes mannosyl-3-phosphoglycerate (MPG) to form the osmolyte mannosylglycerate (MG). The protein is Mannosyl-3-phosphoglycerate phosphatase of Pyrococcus furiosus (strain ATCC 43587 / DSM 3638 / JCM 8422 / Vc1).